Reading from the N-terminus, the 219-residue chain is 7-cyano-7-deazaguanine synthase (219 aa).

10–20 contacts ATP; sequence FSGGQDSTTCL. The Zn(2+) site is built by C188, C196, C199, and C202.

Belongs to the QueC family. Zn(2+) is required as a cofactor.

The catalysed reaction is 7-carboxy-7-deazaguanine + NH4(+) + ATP = 7-cyano-7-deazaguanine + ADP + phosphate + H2O + H(+). It functions in the pathway purine metabolism; 7-cyano-7-deazaguanine biosynthesis. Functionally, catalyzes the ATP-dependent conversion of 7-carboxy-7-deazaguanine (CDG) to 7-cyano-7-deazaguanine (preQ(0)). This is 7-cyano-7-deazaguanine synthase from Neisseria meningitidis serogroup B (strain ATCC BAA-335 / MC58).